A 499-amino-acid polypeptide reads, in one-letter code: Thioredoxin reductase 1, cytoplasmic (499 aa).

FAD contacts are provided by residues Ser-22–Gly-23, Asp-42–Phe-43, Thr-58–Cys-59, and Ser-63–Lys-67. Residues Cys-59 and Cys-64 are joined by a disulfide bond. Lys-68 is subject to N6-succinyllysine. Residue Tyr-131 is modified to Phosphotyrosine. FAD is bound by residues Tyr-131–Gly-132 and Thr-161. NADP(+) contacts are provided by residues Arg-166, Ala-198–Glu-204, Arg-221–Ser-222, Arg-226, Arg-226–Phe-228, Gly-292–Arg-293, and Lys-315. FAD is bound at residue Tyr-200. FAD contacts are provided by residues Asp-334, Glu-341–Thr-343, and His-472. NADP(+) is bound at residue Glu-341. Residue His-472 is the Proton acceptor of the active site. The segment at residues Cys-497–Sec-498 is a cross-link (cysteinyl-selenocysteine (Cys-Sec)). Position 498 (Sec-498) is a non-standard amino acid, selenocysteine.

This sequence belongs to the class-I pyridine nucleotide-disulfide oxidoreductase family. As to quaternary structure, homodimer. FAD is required as a cofactor. Post-translationally, ISGylated.

It localises to the cytoplasm. The enzyme catalyses [thioredoxin]-dithiol + NADP(+) = [thioredoxin]-disulfide + NADPH + H(+). It catalyses the reaction H2O2 + NADPH + H(+) = NADP(+) + 2 H2O. In terms of biological role, reduces disulfideprotein thioredoxin (Trx) to its dithiol-containing form. Homodimeric flavoprotein involved in the regulation of cellular redox reactions, growth and differentiation. Contains a selenocysteine residue at the C-terminal active site that is essential for catalysis. Also has reductase activity on hydrogen peroxide (H2O2). The sequence is that of Thioredoxin reductase 1, cytoplasmic (TXNRD1) from Sus scrofa (Pig).